A 311-amino-acid polypeptide reads, in one-letter code: uncharacterized protein (311 aa).

Residues 1–13 (MLLSLIFPIAVLG) form the signal peptide. Asn-115 carries an N-linked (GlcNAc...) asparagine glycan.

The protein resides in the secreted. This is an uncharacterized protein from Encephalitozoon cuniculi (strain GB-M1) (Microsporidian parasite).